We begin with the raw amino-acid sequence, 360 residues long: NADP-dependent alcohol dehydrogenase 6 (360 aa).

Residue C46 coordinates Zn(2+). NADP(+) contacts are provided by G47 and H51. Zn(2+) is bound by residues H68, C100, C103, C106, and C114. A Phosphoserine modification is found at S131. C163 lines the Zn(2+) pocket. Residues L188, G190, I191, S210, R211, K215, C250, S252, T255, D256, I275, I277, Y298, S299, L301, and R348 each coordinate NADP(+). Residue S359 is modified to Phosphoserine.

Belongs to the zinc-containing alcohol dehydrogenase family. As to quaternary structure, homodimer. Zn(2+) is required as a cofactor.

Its subcellular location is the cytoplasm. It localises to the nucleus. It carries out the reaction a primary alcohol + NADP(+) = an aldehyde + NADPH + H(+). It catalyses the reaction (E)-cinnamyl alcohol + NADP(+) = (E)-cinnamaldehyde + NADPH + H(+). The enzyme catalyses hexan-1-ol + NADP(+) = hexanal + NADPH + H(+). The catalysed reaction is 3-methylbutanol + NADP(+) = 3-methylbutanal + NADPH + H(+). It carries out the reaction S-nitroso-CoA + NADPH + H(+) = sulfinamide-CoA + NADP(+). Its function is as follows. NADP-dependent, medium-chain alcohol dehydrogenase with a broad substrate specificity. Aldehydes exhibited 50-12000 times higher catalytic efficiency than the corresponding alcohols, therefore the major function of the enzyme is as an aldehyde reductase. The enzyme is active towards aromatic and aliphatic (linear and branched-chain) aldehydes. The enzyme is very active towards aromatic aldehydes, such as cinnamaldehyde, benzaldehyde and substituted benzaldehydes, such as veratraldehyde and panisaldehyde. It exhibits low activity towards substituted cinnamaldehydes, such as coniferaldehyde and sinapaldehyde. The enzyme has no activity with ketones, such as acetone or cyclohexanone. For the reverse reaction, linear and branched-chain primary alcohols are substrates, whereas very low activity is found with secondary alcohols, such as butan-2-ol. The enzyme may be physiologically involved in several steps of the lignin degradation pathway, initiated by other microorganisms, in the synthesis of fusel alcohols, products derived from the aminoacidic metabolism, and in the homeostasis of NADP(H). Has the ability to reduce 5-hydroxymethyl furfural (HMF), a furan derivative which is formed during the hydrolysis of lignocellulosic materials, to 5-hydroxymethylfurfuryl alcohol, thereby alleviating the inhibition of the fermentation of lignocellulose hydrolysates by HMF during fuel ethanol production. Also acts as an inhibitor of protein S-nitrosylation by mediating degradation of S-nitroso-coenzyme A (S-nitroso-CoA), a cofactor required to S-nitrosylate proteins. The polypeptide is NADP-dependent alcohol dehydrogenase 6 (Saccharomyces cerevisiae (strain ATCC 204508 / S288c) (Baker's yeast)).